A 143-amino-acid polypeptide reads, in one-letter code: MSLSTKDKDTVTAFWGKVSCKAGDIGTDALSRMLVVYPQTKTYFSHWKELGPGSPPVQKHGMTVMKGVGEAVAKIDDLTAGLLNLSELHAFTLRVDPANFKILSHNILVVFAIMFPHDFTPEVHVSMDKFLAALARALSEKYR.

Serine 2 bears the N-acetylserine mark. In terms of domain architecture, Globin spans 2–143 (SLSTKDKDTV…LARALSEKYR (142 aa)). Histidine 60 and histidine 89 together coordinate heme b.

This sequence belongs to the globin family. In terms of assembly, hb 2 is a heterotetramer of two alpha-2 and two beta chains. As to expression, red blood cells.

Functionally, involved in oxygen transport from gills to the various peripheral tissues. This Cottoperca gobio (Frogmouth) protein is Hemoglobin subunit alpha-2.